The sequence spans 448 residues: Chaperone SurA (448 aa).

The N-terminal stretch at 1-27 is a signal peptide; that stretch reads MKKTLRFAAVASGLVASLITVAPSASA. PpiC domains follow at residues 185-288 and 301-399; these read QQDL…RLVE and IVQT…QVLG.

It is found in the periplasm. The enzyme catalyses [protein]-peptidylproline (omega=180) = [protein]-peptidylproline (omega=0). Chaperone involved in the correct folding and assembly of outer membrane proteins. Recognizes specific patterns of aromatic residues and the orientation of their side chains, which are found more frequently in integral outer membrane proteins. May act in both early periplasmic and late outer membrane-associated steps of protein maturation. The polypeptide is Chaperone SurA (Burkholderia pseudomallei (strain 1710b)).